The following is a 173-amino-acid chain: Ribosome maturation factor RimM (173 aa).

Residues 94-173 (EGEFYWRDLI…TIEVDWDPGF (80 aa)) form the PRC barrel domain.

It belongs to the RimM family. In terms of assembly, binds ribosomal protein uS19.

It is found in the cytoplasm. Functionally, an accessory protein needed during the final step in the assembly of 30S ribosomal subunit, possibly for assembly of the head region. Essential for efficient processing of 16S rRNA. May be needed both before and after RbfA during the maturation of 16S rRNA. It has affinity for free ribosomal 30S subunits but not for 70S ribosomes. The sequence is that of Ribosome maturation factor RimM from Aeromonas salmonicida (strain A449).